Here is a 146-residue protein sequence, read N- to C-terminus: VHWTAEEKQLITGLWGKVNVADCGAEALARLLIVYPWTQRFFASFGNLSSPTAIIGNPMVRAHGKKVLTSFGEAVKNLDNIKNTFAQLSELHCDKLHVDPENFRLLGDILIIVLAAHFGKDFSPDCQAAWQKLVRAVAHALARKYH.

A Globin domain is found at 2-146 (HWTAEEKQLI…VAHALARKYH (145 aa)). Heme b contacts are provided by His-63 and His-92.

The protein belongs to the globin family. As to quaternary structure, heterotetramer of two alpha chains and two beta chains. Red blood cells.

Its function is as follows. Involved in oxygen transport from the lung to the various peripheral tissues. This chain is Hemoglobin subunit beta (HBB), found in Aegypius monachus (Cinereous vulture).